The following is a 1091-amino-acid chain: Error-prone DNA polymerase 1 (1091 aa).

Residues 1051 to 1064 (RGDEFHHGMPDDHR) are compositionally biased toward basic and acidic residues. Residues 1051 to 1080 (RGDEFHHGMPDDHRAIRKRPPPSNHDDDEV) form a disordered region.

This sequence belongs to the DNA polymerase type-C family. DnaE2 subfamily.

It localises to the cytoplasm. It catalyses the reaction DNA(n) + a 2'-deoxyribonucleoside 5'-triphosphate = DNA(n+1) + diphosphate. Its function is as follows. DNA polymerase involved in damage-induced mutagenesis and translesion synthesis (TLS). It is not the major replicative DNA polymerase. The chain is Error-prone DNA polymerase 1 from Agrobacterium fabrum (strain C58 / ATCC 33970) (Agrobacterium tumefaciens (strain C58)).